A 777-amino-acid polypeptide reads, in one-letter code: Isoamylase (777 aa).

The first 32 residues, 1–32 (MDPHAPQRQRSGQRLRALALAALACALSPAHA), serve as a signal peptide directing secretion. Asp-162, Glu-263, Thr-264, Asn-266, and Asp-293 together coordinate Ca(2+). Asp-410 acts as the Nucleophile in catalysis. Cys-419 and Cys-423 are disulfide-bonded. Residue Glu-458 is the Proton donor of the active site.

It belongs to the glycosyl hydrolase 13 family. As to quaternary structure, monomer. Requires Ca(2+) as cofactor.

It carries out the reaction Hydrolysis of (1-&gt;6)-alpha-D-glucosidic branch linkages in glycogen, amylopectin and their beta-limit dextrins.. Has a high rate of hydrolysis for glycogen. Does not cleave pullulan. The chain is Isoamylase (iam) from Flavobacterium sp.